A 490-amino-acid polypeptide reads, in one-letter code: Cytochrome P450 2C1 (490 aa).

Cysteine 435 lines the heme pocket.

The protein belongs to the cytochrome P450 family. Heme is required as a cofactor.

Its subcellular location is the endoplasmic reticulum membrane. The protein resides in the microsome membrane. It carries out the reaction an organic molecule + reduced [NADPH--hemoprotein reductase] + O2 = an alcohol + oxidized [NADPH--hemoprotein reductase] + H2O + H(+). Its function is as follows. Cytochromes P450 are a group of heme-thiolate monooxygenases. In liver microsomes, this enzyme is involved in an NADPH-dependent electron transport pathway. It oxidizes a variety of structurally unrelated compounds, including steroids, fatty acids, and xenobiotics. The chain is Cytochrome P450 2C1 (CYP2C1) from Oryctolagus cuniculus (Rabbit).